Consider the following 379-residue polypeptide: NAD-dependent protein deacetylase sirtuin-2 (379 aa).

Residues 1–10 are compositionally biased toward basic and acidic residues; that stretch reads MSEEVSKRVE. Residues 1–32 form a disordered region; that stretch reads MSEEVSKRVEEEADTPGLEGQSDDSSDEGDAS. A compositionally biased stretch (acidic residues) spans 21-32; it reads QSDDSSDEGDAS. Residues 55–335 enclose the Deacetylase sirtuin-type domain; it reads KVLDELTLDS…MTLAELLGWK (281 aa). NAD(+)-binding positions include 83–87, 93–95, and 165–168; these read AGIST, DFR, and QNID. H185 (proton acceptor) is an active-site residue. Zn(2+)-binding residues include C193, C198, C219, and C222. Residues 260 to 261, 284 to 286, and C321 each bind NAD(+); these read TS and NME. Over residues 349–361 the composition is skewed to basic and acidic residues; that stretch reads IDSKDAKKTDKEA. Positions 349–379 are disordered; the sequence is IDSKDAKKTDKEASQSSKSAVAEAEKTDKTE.

This sequence belongs to the sirtuin family. Class I subfamily. The cofactor is Zn(2+).

The protein localises to the cytoplasm. It is found in the nucleus. The catalysed reaction is N(6)-acetyl-L-lysyl-[protein] + NAD(+) + H2O = 2''-O-acetyl-ADP-D-ribose + nicotinamide + L-lysyl-[protein]. It catalyses the reaction N(6)-tetradecanoyl-L-lysyl-[protein] + NAD(+) + H2O = 2''-O-tetradecanoyl-ADP-D-ribose + nicotinamide + L-lysyl-[protein]. The enzyme catalyses N(6)-hexadecanoyl-L-lysyl-[protein] + NAD(+) + H2O = 2''-O-hexadecanoyl-ADP-D-ribose + nicotinamide + L-lysyl-[protein]. Its function is as follows. NAD-dependent protein deacetylase, which deacetylates internal lysines on histone and alpha-tubulin as well as many other proteins such as key transcription factors. Participates in the modulation of multiple and diverse biological processes such as cell cycle control, genomic integrity, microtubule dynamics, cell differentiation, metabolic networks, and autophagy. Plays a major role in the control of cell cycle progression and genomic stability. Deacetylates histone H4 at 'Lys-16' (H4K16ac) at the VEGFA promoter. Thereby contributes to regulate expression of vegfa, a key regulator of angiogenesis. In addition to protein deacetylase activity, also has activity toward long-chain fatty acyl groups and mediates protein-lysine demyristoylation and depalmitoylation of target proteins. The chain is NAD-dependent protein deacetylase sirtuin-2 (sirt2) from Danio rerio (Zebrafish).